The primary structure comprises 241 residues: Carboxy-S-adenosyl-L-methionine synthase (241 aa).

S-adenosyl-L-methionine contacts are provided by residues tyrosine 38, 63–65 (GCS), 88–89 (DN), 116–117 (DI), asparagine 131, and arginine 198.

The protein belongs to the class I-like SAM-binding methyltransferase superfamily. Cx-SAM synthase family. Homodimer.

It carries out the reaction prephenate + S-adenosyl-L-methionine = carboxy-S-adenosyl-L-methionine + 3-phenylpyruvate + H2O. Its function is as follows. Catalyzes the conversion of S-adenosyl-L-methionine (SAM) to carboxy-S-adenosyl-L-methionine (Cx-SAM). The polypeptide is Carboxy-S-adenosyl-L-methionine synthase (Pseudoalteromonas translucida (strain TAC 125)).